The chain runs to 223 residues: Phosphoribosylformylglycinamidine synthase subunit PurQ (223 aa).

The Glutamine amidotransferase type-1 domain maps to 3–223 (SAVILLPGLN…LFAGALGITA (221 aa)). Cys-87 serves as the catalytic Nucleophile. Residues His-197 and Glu-199 contribute to the active site.

As to quaternary structure, part of the FGAM synthase complex composed of 1 PurL, 1 PurQ and 2 PurS subunits.

It localises to the cytoplasm. The catalysed reaction is N(2)-formyl-N(1)-(5-phospho-beta-D-ribosyl)glycinamide + L-glutamine + ATP + H2O = 2-formamido-N(1)-(5-O-phospho-beta-D-ribosyl)acetamidine + L-glutamate + ADP + phosphate + H(+). It catalyses the reaction L-glutamine + H2O = L-glutamate + NH4(+). It participates in purine metabolism; IMP biosynthesis via de novo pathway; 5-amino-1-(5-phospho-D-ribosyl)imidazole from N(2)-formyl-N(1)-(5-phospho-D-ribosyl)glycinamide: step 1/2. Its function is as follows. Part of the phosphoribosylformylglycinamidine synthase complex involved in the purines biosynthetic pathway. Catalyzes the ATP-dependent conversion of formylglycinamide ribonucleotide (FGAR) and glutamine to yield formylglycinamidine ribonucleotide (FGAM) and glutamate. The FGAM synthase complex is composed of three subunits. PurQ produces an ammonia molecule by converting glutamine to glutamate. PurL transfers the ammonia molecule to FGAR to form FGAM in an ATP-dependent manner. PurS interacts with PurQ and PurL and is thought to assist in the transfer of the ammonia molecule from PurQ to PurL. This chain is Phosphoribosylformylglycinamidine synthase subunit PurQ, found in Brucella abortus biovar 1 (strain 9-941).